The sequence spans 283 residues: MSESQPPRRGRFPLPLSATTPVVRRFVSTGQAVLQPVPPRPQRPASEITRETARPAILAGHGLDSDGFRARMIERLRADGCRDEHVLRAMSRVPRHLFVDSALAAQAYEDTSLPIGHGQTISKPSVVARMLGLLRQRPGGAQLGRVLEIGTGCGYQAAVLCRLASQVYSIERLKALHDRARENLAPMRRDQLRLIYGDGLHGHGPNAPFDAIIAAAGGHAIPQAWLDQLAVCGRLVAPMHDAQRGTQVLVVVDRMPDGSLVQHRHETVRFVPLESGTSDYKPA.

Serine 122 is a catalytic residue.

The protein belongs to the methyltransferase superfamily. L-isoaspartyl/D-aspartyl protein methyltransferase family.

Its subcellular location is the cytoplasm. It carries out the reaction [protein]-L-isoaspartate + S-adenosyl-L-methionine = [protein]-L-isoaspartate alpha-methyl ester + S-adenosyl-L-homocysteine. In terms of biological role, catalyzes the methyl esterification of L-isoaspartyl residues in peptides and proteins that result from spontaneous decomposition of normal L-aspartyl and L-asparaginyl residues. It plays a role in the repair and/or degradation of damaged proteins. This is Protein-L-isoaspartate O-methyltransferase from Leptothrix cholodnii (strain ATCC 51168 / LMG 8142 / SP-6) (Leptothrix discophora (strain SP-6)).